Consider the following 353-residue polypeptide: Photosystem II protein D1 (353 aa).

T2 is modified (N-acetylthreonine). T2 bears the Phosphothreonine mark. 3 helical membrane-spanning segments follow: residues 29–46, 118–133, and 142–156; these read YIGW…TATS, HFLL…EWEL, and WIAV…AATA. H118 is a binding site for chlorophyll a. Y126 provides a ligand contact to pheophytin a. [CaMn4O5] cluster-binding residues include D170 and E189. A helical transmembrane segment spans residues 197–218; the sequence is FHMLGVAGVFGGSLFSAMHGSL. H198 lines the chlorophyll a pocket. A quinone is bound by residues H215 and 264–265; that span reads SF. Position 215 (H215) interacts with Fe cation. H272 is a Fe cation binding site. A helical membrane pass occupies residues 274 to 288; it reads FLAAWPVVGIWFTAL. 4 residues coordinate [CaMn4O5] cluster: H332, E333, D342, and A344. The propeptide occupies 345–353; that stretch reads AVEAPSTIG.

This sequence belongs to the reaction center PufL/M/PsbA/D family. In terms of assembly, PSII is composed of 1 copy each of membrane proteins PsbA, PsbB, PsbC, PsbD, PsbE, PsbF, PsbH, PsbI, PsbJ, PsbK, PsbL, PsbM, PsbT, PsbX, PsbY, PsbZ, Psb30/Ycf12, at least 3 peripheral proteins of the oxygen-evolving complex and a large number of cofactors. It forms dimeric complexes. The D1/D2 heterodimer binds P680, chlorophylls that are the primary electron donor of PSII, and subsequent electron acceptors. It shares a non-heme iron and each subunit binds pheophytin, quinone, additional chlorophylls, carotenoids and lipids. D1 provides most of the ligands for the Mn4-Ca-O5 cluster of the oxygen-evolving complex (OEC). There is also a Cl(-1) ion associated with D1 and D2, which is required for oxygen evolution. The PSII complex binds additional chlorophylls, carotenoids and specific lipids. serves as cofactor. Tyr-161 forms a radical intermediate that is referred to as redox-active TyrZ, YZ or Y-Z. Post-translationally, C-terminally processed by CTPA; processing is essential to allow assembly of the oxygen-evolving complex and thus photosynthetic growth.

It localises to the plastid. Its subcellular location is the chloroplast thylakoid membrane. The catalysed reaction is 2 a plastoquinone + 4 hnu + 2 H2O = 2 a plastoquinol + O2. Functionally, photosystem II (PSII) is a light-driven water:plastoquinone oxidoreductase that uses light energy to abstract electrons from H(2)O, generating O(2) and a proton gradient subsequently used for ATP formation. It consists of a core antenna complex that captures photons, and an electron transfer chain that converts photonic excitation into a charge separation. The D1/D2 (PsbA/PsbD) reaction center heterodimer binds P680, the primary electron donor of PSII as well as several subsequent electron acceptors. In Lemna minor (Common duckweed), this protein is Photosystem II protein D1.